The sequence spans 307 residues: Myeloid-associated differentiation marker-like protein 2 (307 aa).

2 MARVEL domains span residues 17 to 154 (AVTS…ARPG) and 159 to 303 (YMAT…RIRF). 7 helical membrane-spanning segments follow: residues 53 to 73 (FCVA…ACEF), 90 to 110 (AFAM…PLYF), 129 to 149 (LAAS…VALT), 163 to 183 (VSGL…GALV), 198 to 218 (VAVY…SVLG), 232 to 252 (VVYT…WPVF), and 278 to 298 (LVVA…LAYS).

It belongs to the MAL family.

The protein localises to the membrane. The sequence is that of Myeloid-associated differentiation marker-like protein 2 (MYADML2) from Bos taurus (Bovine).